Reading from the N-terminus, the 362-residue chain is Fe-S cluster assembly protein DRE2 (362 aa).

The disordered stretch occupies residues 1–28; sequence MAPGLDLTPDFHPPTTTTTTTNNAPPQQ. Residues 15 to 28 are compositionally biased toward low complexity; the sequence is TTTTTTTNNAPPQQ. The N-terminal SAM-like domain stretch occupies residues 24 to 165; sequence APPQQRTLLL…KPEYAEEEAV (142 aa). The interval 166-254 is linker; sequence PLRFGKKKAA…EETLLTEEDL (89 aa). Residues Cys264, Cys275, Cys278, and Cys280 each coordinate [2Fe-2S] cluster. The tract at residues 264-280 is fe-S binding site A; sequence CQPQPGKKRRACKDCTC. Positions 325, 328, 336, and 339 each coordinate [4Fe-4S] cluster. 2 short sequence motifs (cx2C motif) span residues 325–328 and 336–339; these read CGSC and CSDC. The interval 325–339 is fe-S binding site B; sequence CGSCYLGDAFRCSDC.

It belongs to the anamorsin family. In terms of assembly, monomer. Interacts with TAH18. Interacts with MIA40. The cofactor is [2Fe-2S] cluster. [4Fe-4S] cluster serves as cofactor.

The protein resides in the cytoplasm. It localises to the mitochondrion intermembrane space. Component of the cytosolic iron-sulfur (Fe-S) protein assembly (CIA) machinery required for the maturation of extramitochondrial Fe-S proteins. Part of an electron transfer chain functioning in an early step of cytosolic Fe-S biogenesis, facilitating the de novo assembly of a [4Fe-4S] cluster on the scaffold complex CFD1-NBP35. Electrons are transferred to DRE2 from NADPH via the FAD- and FMN-containing protein TAH18. TAH18-DRE2 are also required for the assembly of the diferric tyrosyl radical cofactor of ribonucleotide reductase (RNR), probably by providing electrons for reduction during radical cofactor maturation in the catalytic small subunit RNR2. The chain is Fe-S cluster assembly protein DRE2 from Chaetomium globosum (strain ATCC 6205 / CBS 148.51 / DSM 1962 / NBRC 6347 / NRRL 1970) (Soil fungus).